Reading from the N-terminus, the 97-residue chain is Glutamyl-tRNA(Gln) amidotransferase subunit C (97 aa).

This sequence belongs to the GatC family. Heterotrimer of A, B and C subunits.

It catalyses the reaction L-glutamyl-tRNA(Gln) + L-glutamine + ATP + H2O = L-glutaminyl-tRNA(Gln) + L-glutamate + ADP + phosphate + H(+). The catalysed reaction is L-aspartyl-tRNA(Asn) + L-glutamine + ATP + H2O = L-asparaginyl-tRNA(Asn) + L-glutamate + ADP + phosphate + 2 H(+). Allows the formation of correctly charged Asn-tRNA(Asn) or Gln-tRNA(Gln) through the transamidation of misacylated Asp-tRNA(Asn) or Glu-tRNA(Gln) in organisms which lack either or both of asparaginyl-tRNA or glutaminyl-tRNA synthetases. The reaction takes place in the presence of glutamine and ATP through an activated phospho-Asp-tRNA(Asn) or phospho-Glu-tRNA(Gln). This chain is Glutamyl-tRNA(Gln) amidotransferase subunit C, found in Sulfurisphaera tokodaii (strain DSM 16993 / JCM 10545 / NBRC 100140 / 7) (Sulfolobus tokodaii).